The sequence spans 386 residues: Circumsporozoite protein (386 aa).

The first 22 residues, 1–22, serve as a signal peptide directing secretion; it reads MKNFILLAVSSILLVDLFPTHC. The segment at 51–304 is disordered; that stretch reads HVGQSASRGR…NEGANAPNEK (254 aa). Over residues 72-100 the composition is skewed to basic and acidic residues; sequence DAKKKKDGKKAEPKNPRENKLKQPGDRAD. The segment at 80–88 is required for the binding to heparan sulfate proteoglycans (HSPGs) on the surface of host hepatocytes; sequence KKAEPKNPR. Residues 91 to 95 are region I; contains the proteolytic cleavage site; that stretch reads KLKQP. 20 consecutive repeat copies span residues 96–104, 105–113, 114–122, 123–131, 132–140, 141–149, 150–158, 159–167, 168–176, 177–185, 186–194, 195–203, 204–212, 213–221, 222–230, 231–239, 240–248, 249–257, 258–266, and 267–275. The tract at residues 96–275 is 20 X 9 AA tandem repeats of G-D-R-A-[AD]-G-Q-P-A; the sequence is GDRADGQPAG…AGDRAAGQPA (180 aa). Positions 275–292 are enriched in gly residues; sequence AGNGAGGQAAGGNAGGQG. Low complexity predominate over residues 293 to 303; it reads QNNEGANAPNE. The 53-residue stretch at 312–364 folds into the TSP type-1 domain; sequence KVRATVGTEWTPCSVTCGVGVRVRRRVNAANKKPEDLTLNDLETDVCTMDKCA. Disulfide bonds link C324–C358 and C328–C363. T327 is a glycosylation site (O-linked (Fuc) threonine). The GPI-anchor amidated cysteine moiety is linked to residue C363. Positions 364–386 are cleaved as a propeptide — removed in mature form; sequence AGIFNVVSNSLGLVILLVLALFN.

This sequence belongs to the plasmodium circumsporozoite protein family. During host cell invasion, proteolytically cleaved at the cell membrane in the region I by a papain-like cysteine protease of parasite origin. Cleavage is triggered by the sporozoite contact with highly sulfated heparan sulfate proteoglycans (HSPGs) present on the host hepatocyte cell surface. Cleavage exposes the TSP type-1 (TSR) domain and is required for productive invasion of host hepatocytes but not for adhesion to the host cell membrane. Cleavage is dispensable for sporozoite development in the oocyst, motility and for traversal of host and vector cells. In terms of processing, O-glycosylated; maybe by POFUT2.

The protein resides in the cell membrane. Its subcellular location is the cytoplasm. Essential sporozoite protein. In the mosquito vector, required for sporozoite development in the oocyst, migration through the vector hemolymph and entry into the vector salivary glands. In the vertebrate host, required for sporozoite migration through the host dermis and infection of host hepatocytes. Binds to highly sulfated heparan sulfate proteoglycans (HSPGs) on the surface of host hepatocytes. Its function is as follows. In the vertebrate host, binds to highly sulfated heparan sulfate proteoglycans (HSPGs) on the surface of host hepatocytes and is required for sporozoite invasion of the host hepatocytes. This Plasmodium simium protein is Circumsporozoite protein.